The sequence spans 631 residues: NADPH oxidoreductase A (631 aa).

The region spanning 73 to 212 (ILILYGTEYG…CFDRYIDTVC (140 aa)) is the Flavodoxin-like domain. FMN-binding positions include 79–83 (TEYGL) and 160–191 (VLALGDRSYPHYCAAGKTLDKQFEEMGAKRFR). The FAD-binding FR-type domain occupies 247–480 (KKPYSSKLLV…INNNPDFRLP (234 aa)). 249 to 299 (PYSSKLLVKRVLTKGDKVGIHLEFELGDSELKYVPGDALAILPDNAASEVS) serves as a coordination point for FAD. 504-630 (QERKALGHTG…KEKRYQKDVW (127 aa)) serves as a coordination point for NADP(+).

It depends on FAD as a cofactor. The cofactor is FMN.

Its function is as follows. Probable NADPH oxidoreductase that controls development beyond the mound stage. The sequence is that of NADPH oxidoreductase A (redA) from Dictyostelium discoideum (Social amoeba).